The primary structure comprises 117 residues: uncharacterized protein (117 aa).

This is an uncharacterized protein from Homo sapiens (Human).